The chain runs to 136 residues: Large-conductance mechanosensitive channel (136 aa).

3 helical membrane passes run 15–35, 38–58, and 80–100; these read IDLA…NSIV, IFMP…MFIQ, and GHFI…FFFV.

It belongs to the MscL family. Homopentamer.

The protein localises to the cell inner membrane. In terms of biological role, channel that opens in response to stretch forces in the membrane lipid bilayer. May participate in the regulation of osmotic pressure changes within the cell. The protein is Large-conductance mechanosensitive channel of Bartonella tribocorum (strain CIP 105476 / IBS 506).